A 306-amino-acid polypeptide reads, in one-letter code: [methyl-Co(III) glycine betaine-specific corrinoid protein]--tetrahydrofolate methyltransferase (306 aa).

The protein belongs to the MtrH family.

The catalysed reaction is methyl-Co(III)-[glycine betaine-specific corrinoid protein] + (6S)-5,6,7,8-tetrahydrofolate = Co(I)-[glycine betaine-specific corrinoid protein] + (6S)-5-methyl-5,6,7,8-tetrahydrofolate + H(+). In terms of biological role, methyltransferase able to catalyze the transfer of a methyl group from methylcobalamin (methylCbl) to tetrahydrofolate (THF) in vitro, to generate methyl-THF and cob(I)alamin. In vivo, the methyl group probably comes from the adjacently encoded methylated corrinoid protein DSY3155. The methyl group may then be ultimately converted to carbon dioxide, and its oxidation would also provide reducing equivalents for anaerobic respiration. Thus, may function in the pathway that allows anaerobic methylotrophic growth of D.hafniense using glycine betaine. This is [methyl-Co(III) glycine betaine-specific corrinoid protein]--tetrahydrofolate methyltransferase from Desulfitobacterium hafniense (strain Y51).